Consider the following 322-residue polypeptide: Phosphatidylserine decarboxylase proenzyme (322 aa).

Active-site charge relay system; for autoendoproteolytic cleavage activity residues include Asp90, His147, and Ser254. Ser254 serves as the catalytic Schiff-base intermediate with substrate; via pyruvic acid; for decarboxylase activity. Pyruvic acid (Ser); by autocatalysis is present on Ser254. The tract at residues 293–322 (PDAEPAPLPAEEIEAEHDASPLVDDKKDQV) is disordered. Residues 308–322 (EHDASPLVDDKKDQV) show a composition bias toward basic and acidic residues.

The protein belongs to the phosphatidylserine decarboxylase family. PSD-B subfamily. Prokaryotic type I sub-subfamily. In terms of assembly, heterodimer of a large membrane-associated beta subunit and a small pyruvoyl-containing alpha subunit. Requires pyruvate as cofactor. Post-translationally, is synthesized initially as an inactive proenzyme. Formation of the active enzyme involves a self-maturation process in which the active site pyruvoyl group is generated from an internal serine residue via an autocatalytic post-translational modification. Two non-identical subunits are generated from the proenzyme in this reaction, and the pyruvate is formed at the N-terminus of the alpha chain, which is derived from the carboxyl end of the proenzyme. The autoendoproteolytic cleavage occurs by a canonical serine protease mechanism, in which the side chain hydroxyl group of the serine supplies its oxygen atom to form the C-terminus of the beta chain, while the remainder of the serine residue undergoes an oxidative deamination to produce ammonia and the pyruvoyl prosthetic group on the alpha chain. During this reaction, the Ser that is part of the protease active site of the proenzyme becomes the pyruvoyl prosthetic group, which constitutes an essential element of the active site of the mature decarboxylase.

The protein resides in the cell membrane. The catalysed reaction is a 1,2-diacyl-sn-glycero-3-phospho-L-serine + H(+) = a 1,2-diacyl-sn-glycero-3-phosphoethanolamine + CO2. It functions in the pathway phospholipid metabolism; phosphatidylethanolamine biosynthesis; phosphatidylethanolamine from CDP-diacylglycerol: step 2/2. Catalyzes the formation of phosphatidylethanolamine (PtdEtn) from phosphatidylserine (PtdSer). In Escherichia coli O9:H4 (strain HS), this protein is Phosphatidylserine decarboxylase proenzyme.